We begin with the raw amino-acid sequence, 393 residues long: Protein TsgA (393 aa).

12 helical membrane passes run 11-31, 51-71, 78-98, 101-121, 134-154, 162-182, 206-226, 245-265, 273-293, 297-317, 332-352, and 361-381; these read WISF…GMVM, FLNA…EIVP, FGFL…SLAL, AAMF…TFLI, LLFT…IAAF, WYWV…LTFG, IGVL…LGFI, TLVS…SFIL, ILTV…TGTP, AWSI…IITL, FVLT…GPIV, and LLTA…LGFV.

This sequence belongs to the major facilitator superfamily. TsgA family.

The protein localises to the cell inner membrane. The sequence is that of Protein TsgA from Escherichia coli O7:K1 (strain IAI39 / ExPEC).